A 400-amino-acid polypeptide reads, in one-letter code: Argininosuccinate synthase (400 aa).

Residue 8 to 16 (AYSGGLDTS) coordinates ATP. Tyr-87 serves as a coordination point for L-citrulline. Gly-117 contacts ATP. Positions 119, 123, and 124 each coordinate L-aspartate. L-citrulline is bound at residue Asn-123. Residues Arg-127, Ser-175, Glu-260, and Tyr-272 each coordinate L-citrulline.

Belongs to the argininosuccinate synthase family. Type 1 subfamily. In terms of assembly, homotetramer.

The protein resides in the cytoplasm. The enzyme catalyses L-citrulline + L-aspartate + ATP = 2-(N(omega)-L-arginino)succinate + AMP + diphosphate + H(+). The protein operates within amino-acid biosynthesis; L-arginine biosynthesis; L-arginine from L-ornithine and carbamoyl phosphate: step 2/3. The chain is Argininosuccinate synthase from Mycolicibacterium gilvum (strain PYR-GCK) (Mycobacterium gilvum (strain PYR-GCK)).